A 235-amino-acid chain; its full sequence is NAD(P)H-hydrate epimerase (235 aa).

In terms of domain architecture, YjeF N-terminal spans Ala-18 to Met-221. Asn-65 to Asp-69 is a binding site for (6S)-NADPHX. Residues Asn-66 and Asp-127 each contribute to the K(+) site. Residues Gly-131–Pro-137 and Asp-160 contribute to the (6S)-NADPHX site. Ser-163 serves as a coordination point for K(+).

This sequence belongs to the NnrE/AIBP family. K(+) is required as a cofactor.

It catalyses the reaction (6R)-NADHX = (6S)-NADHX. The enzyme catalyses (6R)-NADPHX = (6S)-NADPHX. Its function is as follows. Catalyzes the epimerization of the S- and R-forms of NAD(P)HX, a damaged form of NAD(P)H that is a result of enzymatic or heat-dependent hydration. This is a prerequisite for the S-specific NAD(P)H-hydrate dehydratase to allow the repair of both epimers of NAD(P)HX. This is NAD(P)H-hydrate epimerase from Caenorhabditis briggsae.